We begin with the raw amino-acid sequence, 98 residues long: Large ribosomal subunit protein uL23 (98 aa).

The protein belongs to the universal ribosomal protein uL23 family. As to quaternary structure, part of the 50S ribosomal subunit. Contacts protein L29, and trigger factor when it is bound to the ribosome.

One of the early assembly proteins it binds 23S rRNA. One of the proteins that surrounds the polypeptide exit tunnel on the outside of the ribosome. Forms the main docking site for trigger factor binding to the ribosome. This Ruegeria sp. (strain TM1040) (Silicibacter sp.) protein is Large ribosomal subunit protein uL23.